The sequence spans 406 residues: Argininosuccinate synthase (406 aa).

Residue 8 to 16 coordinates ATP; the sequence is AYSGGLDTS. Position 86 (Y86) interacts with L-citrulline. G116 is an ATP binding site. Residues T118, N122, and D123 each coordinate L-aspartate. An L-citrulline-binding site is contributed by N122. Positions 126, 174, 183, 259, and 271 each coordinate L-citrulline.

Belongs to the argininosuccinate synthase family. Type 1 subfamily. In terms of assembly, homotetramer.

It is found in the cytoplasm. The enzyme catalyses L-citrulline + L-aspartate + ATP = 2-(N(omega)-L-arginino)succinate + AMP + diphosphate + H(+). It participates in amino-acid biosynthesis; L-arginine biosynthesis; L-arginine from L-ornithine and carbamoyl phosphate: step 2/3. In Oenococcus oeni (strain ATCC BAA-331 / PSU-1), this protein is Argininosuccinate synthase.